Reading from the N-terminus, the 173-residue chain is Photosystem I assembly protein Ycf3 (173 aa).

TPR repeat units follow at residues 35-68 (AFSY…EEDP), 72-105 (SYIL…NFKL), and 120-153 (GVQA…APDN).

This sequence belongs to the Ycf3 family.

It is found in the plastid. Its subcellular location is the chloroplast thylakoid membrane. Its function is as follows. Essential for the assembly of the photosystem I (PSI) complex. May act as a chaperone-like factor to guide the assembly of the PSI subunits. This Pyropia yezoensis (Susabi-nori) protein is Photosystem I assembly protein Ycf3.